A 505-amino-acid chain; its full sequence is Histidine ammonia-lyase (505 aa).

The 5-imidazolinone (Ala-Gly) cross-link spans 141–143 (ASG). Position 142 is a 2,3-didehydroalanine (Ser) (serine 142).

Belongs to the PAL/histidase family. In terms of processing, contains an active site 4-methylidene-imidazol-5-one (MIO), which is formed autocatalytically by cyclization and dehydration of residues Ala-Ser-Gly.

Its subcellular location is the cytoplasm. It catalyses the reaction L-histidine = trans-urocanate + NH4(+). The protein operates within amino-acid degradation; L-histidine degradation into L-glutamate; N-formimidoyl-L-glutamate from L-histidine: step 1/3. This chain is Histidine ammonia-lyase, found in Bacillus mycoides (strain KBAB4) (Bacillus weihenstephanensis).